The following is a 512-amino-acid chain: 2,3-bisphosphoglycerate-independent phosphoglycerate mutase (512 aa).

Mn(2+) is bound by residues Asp11 and Ser61. Ser61 (phosphoserine intermediate) is an active-site residue. Residues His122, 152 to 153 (RD), Arg184, Arg190, 259 to 262 (RADR), and Lys332 each bind substrate. Positions 399, 403, 440, 441, and 459 each coordinate Mn(2+).

The protein belongs to the BPG-independent phosphoglycerate mutase family. As to quaternary structure, monomer. Mn(2+) is required as a cofactor.

It carries out the reaction (2R)-2-phosphoglycerate = (2R)-3-phosphoglycerate. Its pathway is carbohydrate degradation; glycolysis; pyruvate from D-glyceraldehyde 3-phosphate: step 3/5. In terms of biological role, catalyzes the interconversion of 2-phosphoglycerate and 3-phosphoglycerate. This chain is 2,3-bisphosphoglycerate-independent phosphoglycerate mutase, found in Francisella tularensis subsp. holarctica (strain FTNF002-00 / FTA).